We begin with the raw amino-acid sequence, 522 residues long: Transactivator/viroplasmin protein (522 aa).

Residues 111–126 are compositionally biased toward polar residues; it reads QGIQIPQKSEPNSSVA. Disordered stretches follow at residues 111–133 and 491–522; these read QGIQ…AESG and SADS…KASG.

The protein belongs to the caulimoviridae viroplasmin family.

It is found in the host cytoplasm. Enhances the ribosomal termination-reinitiation event leading to the translation of major open reading frames on the polycistronic viral RNAs. This chain is Transactivator/viroplasmin protein, found in Arabidopsis thaliana (Mouse-ear cress).